We begin with the raw amino-acid sequence, 79 residues long: Small ribosomal subunit protein uS17 (79 aa).

The protein belongs to the universal ribosomal protein uS17 family. As to quaternary structure, part of the 30S ribosomal subunit.

Functionally, one of the primary rRNA binding proteins, it binds specifically to the 5'-end of 16S ribosomal RNA. The chain is Small ribosomal subunit protein uS17 from Mesorhizobium japonicum (strain LMG 29417 / CECT 9101 / MAFF 303099) (Mesorhizobium loti (strain MAFF 303099)).